A 302-amino-acid polypeptide reads, in one-letter code: MTNILDGKKLAKELELRLHEDITEFSPEVGRPPGLAVIRVGDDPASGIYVSNKEKACNRIGLDSFLYHLGTNTSEQEILEVIKALNNDQKVDGILLQLPLPKGLDAEPLLKAIDPEKDVDGLHTLNLGRLLKGEKGPRSCTPAGIMVLLRRNNISLVGKKVVVIGRSILVGKPMALMLQAANATVTVAHSKTINLPEITNQAEVLIVAAGIPQLIGLEHVRSNAVVVDVGIHRIPMEPLKLTGSNYKLCGDVRAEEIYSKIKAITPVPGGVGPMTVAMLMVNTVNRWQYHCGLSSTLSDLLP.

Residues 165 to 167 (GRS), serine 190, and isoleucine 231 each bind NADP(+).

Belongs to the tetrahydrofolate dehydrogenase/cyclohydrolase family. In terms of assembly, homodimer.

The enzyme catalyses (6R)-5,10-methylene-5,6,7,8-tetrahydrofolate + NADP(+) = (6R)-5,10-methenyltetrahydrofolate + NADPH. The catalysed reaction is (6R)-5,10-methenyltetrahydrofolate + H2O = (6R)-10-formyltetrahydrofolate + H(+). The protein operates within one-carbon metabolism; tetrahydrofolate interconversion. Its function is as follows. Catalyzes the oxidation of 5,10-methylenetetrahydrofolate to 5,10-methenyltetrahydrofolate and then the hydrolysis of 5,10-methenyltetrahydrofolate to 10-formyltetrahydrofolate. The chain is Bifunctional protein FolD from Prochlorococcus marinus (strain SARG / CCMP1375 / SS120).